A 102-amino-acid chain; its full sequence is MQVTDVRLRRVETDGRMRAIASITLDEEFVVHDIRVIDGNNGLFVAMPSKRGVDGEFRDIAHPINSDTRAKIQEVVLAEYERVGEEEATAVTEEESESVSAE.

The protein belongs to the SpoVG family.

Functionally, could be involved in septation. The polypeptide is Putative septation protein SpoVG 2 (Listeria innocua serovar 6a (strain ATCC BAA-680 / CLIP 11262)).